Reading from the N-terminus, the 853-residue chain is Replication protein A 70 kDa DNA-binding subunit C (853 aa).

Residues 118–282 are disordered; sequence PKEPGHSSIN…QSAYQPQQPP (165 aa). Composition is skewed to polar residues over residues 124–144, 159–173, 180–194, 201–211, 222–249, and 263–278; these read SSIN…SEQQ, SANS…NSSD, SANS…SSSD, SANSPQRQVVH, PQVS…SSNA, and TATT…AYQP. Residues 312 to 399 constitute a DNA-binding region (OB); that stretch reads WTIKVRVTSK…NDYEIHLDSA (88 aa). Residues 602 to 628 form a C4-type zinc finger; sequence CPIMNGDRPCSKKVTNNGDGTWRCEKC.

This sequence belongs to the replication factor A protein 1 family. Heterotrimer of RPA1, RPA2 and RPA3 (canonical replication protein A complex).

The protein localises to the nucleus. Component of the replication protein A complex (RPA) required for DNA recombination, repair and replication. The activity of RPA is mediated by single-stranded DNA binding and protein interactions. Probably involved in repair of double-strand DNA breaks (DSBs) induced by genotoxic stresses. The polypeptide is Replication protein A 70 kDa DNA-binding subunit C (RPA1C) (Arabidopsis thaliana (Mouse-ear cress)).